The following is a 210-amino-acid chain: Imidazoleglycerol-phosphate dehydratase (210 aa).

The interval 1-23 is disordered; that stretch reads MNDSLLSNGHAPPLRQATVDRQT.

It belongs to the imidazoleglycerol-phosphate dehydratase family.

It is found in the cytoplasm. It catalyses the reaction D-erythro-1-(imidazol-4-yl)glycerol 3-phosphate = 3-(imidazol-4-yl)-2-oxopropyl phosphate + H2O. It functions in the pathway amino-acid biosynthesis; L-histidine biosynthesis; L-histidine from 5-phospho-alpha-D-ribose 1-diphosphate: step 6/9. This is Imidazoleglycerol-phosphate dehydratase from Thermosynechococcus vestitus (strain NIES-2133 / IAM M-273 / BP-1).